The sequence spans 118 residues: Large ribosomal subunit protein bL20 (118 aa).

This sequence belongs to the bacterial ribosomal protein bL20 family.

Its function is as follows. Binds directly to 23S ribosomal RNA and is necessary for the in vitro assembly process of the 50S ribosomal subunit. It is not involved in the protein synthesizing functions of that subunit. This is Large ribosomal subunit protein bL20 from Trichormus variabilis (strain ATCC 29413 / PCC 7937) (Anabaena variabilis).